Consider the following 229-residue polypeptide: uncharacterized protein (229 aa).

Transmembrane regions (helical) follow at residues 21–41 (IYSLVGMGVGLSAFVSYLMLY), 56–76 (MIYYGAAIIELILVFVASGAA), 83–103 (ALPIFLIYSALNGFTLSFIIV), 109–129 (TVFQAFLSSAAVFFAMSIIGV), 141–161 (AMFAALIGVVVASLINLFIGS), 162–182 (GMMSYVISVISVLIFSGLIAS), and 202–222 (WAVAMALSLYLDFINLFISLL).

It belongs to the BI1 family.

The protein resides in the cell membrane. This is an uncharacterized protein from Streptococcus pyogenes serotype M6 (strain ATCC BAA-946 / MGAS10394).